The primary structure comprises 247 residues: Carboxy-S-adenosyl-L-methionine synthase (247 aa).

Residues Tyr39, 64-66 (GCS), 89-90 (DN), 117-118 (DI), Asn132, and Arg199 each bind S-adenosyl-L-methionine.

The protein belongs to the class I-like SAM-binding methyltransferase superfamily. Cx-SAM synthase family. In terms of assembly, homodimer.

The catalysed reaction is prephenate + S-adenosyl-L-methionine = carboxy-S-adenosyl-L-methionine + 3-phenylpyruvate + H2O. Functionally, catalyzes the conversion of S-adenosyl-L-methionine (SAM) to carboxy-S-adenosyl-L-methionine (Cx-SAM). This Escherichia fergusonii (strain ATCC 35469 / DSM 13698 / CCUG 18766 / IAM 14443 / JCM 21226 / LMG 7866 / NBRC 102419 / NCTC 12128 / CDC 0568-73) protein is Carboxy-S-adenosyl-L-methionine synthase.